The primary structure comprises 434 residues: Gamma-enolase (434 aa).

Ser-2 bears the N-acetylserine mark. Lys-5 bears the N6-acetyllysine mark. A Phosphothreonine modification is found at Thr-26. Ser-40 contacts Mg(2+). Tyr-44 carries the phosphotyrosine modification. Lys-60 carries the post-translational modification N6-acetyllysine; alternate. Position 60 is an N6-succinyllysine; alternate (Lys-60). At Lys-64 the chain carries N6-acetyllysine. Lys-89 is subject to N6-acetyllysine; alternate. Residue Lys-89 is modified to N6-succinyllysine; alternate. Positions 158 and 167 each coordinate substrate. N6-acetyllysine is present on residues Lys-193, Lys-197, and Lys-199. The residue at position 202 (Lys-202) is an N6-acetyllysine; alternate. A Glycyl lysine isopeptide (Lys-Gly) (interchain with G-Cter in SUMO2); alternate cross-link involves residue Lys-202. The active-site Proton donor is Glu-210. An N6-acetyllysine; alternate mark is found at Lys-228 and Lys-233. An N6-succinyllysine; alternate modification is found at Lys-228. Position 233 is an N6-(2-hydroxyisobutyryl)lysine; alternate (Lys-233). Asp-245 is a Mg(2+) binding site. Lys-256 is modified (N6-acetyllysine). A Phosphoserine modification is found at Ser-263. Tyr-287 carries the phosphotyrosine modification. Ser-291 carries the phosphoserine modification. Residues Glu-293 and Asp-318 each contribute to the Mg(2+) site. Residues Glu-293 and Asp-318 each contribute to the substrate site. N6-acetyllysine occurs at positions 335 and 343. Lys-343 acts as the Proton acceptor in catalysis. Residues 370–373 and Lys-394 each bind substrate; that span reads SHRS. Lys-406 is modified (N6-acetyllysine).

This sequence belongs to the enolase family. In terms of assembly, mammalian enolase is composed of 3 isozyme subunits, alpha, beta and gamma, which can form homodimers or heterodimers which are cell-type and development-specific. The cofactor is Mg(2+). In terms of tissue distribution, the alpha/alpha homodimer is expressed in embryo and in most adult tissues. The alpha/beta heterodimer and the beta/beta homodimer are found in striated muscle, and the alpha/gamma heterodimer and the gamma/gamma homodimer in neurons.

It is found in the cytoplasm. The protein localises to the cell membrane. It carries out the reaction (2R)-2-phosphoglycerate = phosphoenolpyruvate + H2O. Its pathway is carbohydrate degradation; glycolysis; pyruvate from D-glyceraldehyde 3-phosphate: step 4/5. Functionally, has neurotrophic and neuroprotective properties on a broad spectrum of central nervous system (CNS) neurons. Binds, in a calcium-dependent manner, to cultured neocortical neurons and promotes cell survival. The protein is Gamma-enolase (ENO2) of Homo sapiens (Human).